The following is a 439-amino-acid chain: D-inositol 3-phosphate glycosyltransferase (439 aa).

1D-myo-inositol 3-phosphate is bound at residue H21. UDP-N-acetyl-alpha-D-glucosamine-binding positions include 27 to 28 (QP) and G35. 1D-myo-inositol 3-phosphate-binding positions include 32 to 37 (DAGGMN), K90, Y123, T147, and R167. UDP-N-acetyl-alpha-D-glucosamine contacts are provided by R241, K246, and Q299. 3 residues coordinate Mg(2+): Y308, R309, and A311. UDP-N-acetyl-alpha-D-glucosamine is bound by residues E321 and E329. T335 contributes to the Mg(2+) binding site.

The protein belongs to the glycosyltransferase group 1 family. MshA subfamily. In terms of assembly, homodimer.

The enzyme catalyses 1D-myo-inositol 3-phosphate + UDP-N-acetyl-alpha-D-glucosamine = 1D-myo-inositol 2-acetamido-2-deoxy-alpha-D-glucopyranoside 3-phosphate + UDP + H(+). Catalyzes the transfer of a N-acetyl-glucosamine moiety to 1D-myo-inositol 3-phosphate to produce 1D-myo-inositol 2-acetamido-2-deoxy-glucopyranoside 3-phosphate in the mycothiol biosynthesis pathway. The protein is D-inositol 3-phosphate glycosyltransferase of Mycobacterium sp. (strain KMS).